The chain runs to 152 residues: Protein SprT-like (152 aa).

Residues 7–148 form the SprT-like domain; sequence QRLVEEVSLQ…GKCKGKLILI (142 aa). His67 contacts Zn(2+). Glu68 is an active-site residue. A Zn(2+)-binding site is contributed by His71.

Belongs to the SprT family. Zn(2+) is required as a cofactor.

The protein resides in the cytoplasm. The chain is Protein SprT-like from Bacillus cereus (strain ATCC 10987 / NRS 248).